A 504-amino-acid polypeptide reads, in one-letter code: Pyruvate kinase (504 aa).

Position 53 (arginine 53) interacts with substrate. Residues asparagine 55, serine 57, aspartate 88, and threonine 89 each coordinate K(+). An ATP-binding site is contributed by 55–58 (NFSH). Arginine 95 and lysine 181 together coordinate ATP. Mg(2+) is bound at residue glutamate 246. Residues glycine 269, aspartate 270, and threonine 302 each contribute to the substrate site. A Mg(2+)-binding site is contributed by aspartate 270.

The protein belongs to the pyruvate kinase family. As to quaternary structure, homotetramer. Mg(2+) is required as a cofactor. K(+) serves as cofactor.

It carries out the reaction pyruvate + ATP = phosphoenolpyruvate + ADP + H(+). The protein operates within carbohydrate degradation; glycolysis; pyruvate from D-glyceraldehyde 3-phosphate: step 5/5. The polypeptide is Pyruvate kinase (PYK1) (Debaryomyces hansenii (strain ATCC 36239 / CBS 767 / BCRC 21394 / JCM 1990 / NBRC 0083 / IGC 2968) (Yeast)).